We begin with the raw amino-acid sequence, 212 residues long: Adenylate kinase (212 aa).

ATP is bound at residue 10-15 (GAGKGT). Positions 30-59 (AIGDIFRTIIKTSTSEAELINNYVKQGELI) are NMP. Residues Arg36, 57–59 (ELI), 85–88 (GYPR), and Gln92 each bind AMP. The interval 122–160 (GRYSCKNCGKIYNRYFLQPKTDNVCDVCGSSTFDYRKDD) is LID. Arg123 lines the ATP pocket. 2 residues coordinate Zn(2+): Cys126 and Cys129. 132-133 (IY) lines the ATP pocket. Cys146 and Cys149 together coordinate Zn(2+). Residues Arg157 and Arg168 each contribute to the AMP site. Lys196 contributes to the ATP binding site.

Belongs to the adenylate kinase family. In terms of assembly, monomer.

The protein resides in the cytoplasm. It catalyses the reaction AMP + ATP = 2 ADP. The protein operates within purine metabolism; AMP biosynthesis via salvage pathway; AMP from ADP: step 1/1. Functionally, catalyzes the reversible transfer of the terminal phosphate group between ATP and AMP. Plays an important role in cellular energy homeostasis and in adenine nucleotide metabolism. The polypeptide is Adenylate kinase (Rickettsia africae (strain ESF-5)).